Reading from the N-terminus, the 509-residue chain is MGLPWYRVHTVVLNDPGRLIAVHLMHTALVAGWAGSMALYELAVFDPSDPVLNPMWRQGMFVMPFMARLGVTDSWGGWSITGESVSNPGLWSFEGVALTHIVLSGMLFLAAIWHWVYWDLELFRDPRTGEPALDLPKIFGIHLLLSSLLCFGFGAFHVTGLFGPGMWVSDGYGVTGKVLPVAPAWGPEGFNPFNPGGVASHHIAAGTVGILAGVFHLTVRPPQRLYRALRMGNIETVLSSSISAVFFSAFVTCGTMWYGSATTPIELFGPTRYQWDSGYFQQEIEKRVENAIADGAAPSEAWSRIPDKLAFYDYIGNNPAKGGLFRAGPMNKGDGVAEAWLGHPVFQDKEGRELSVRRMPAFFETFPVILVDKDGIIRADIPFRRAESKYSIEQVGVTASFYGGKLNGQVFNDAPSVKKYARKAQLGEVFEFDRTTLESDGVFRSSPRGWFTFGHANFALIFFFGHLWHGSRTIFRDVFAGIGAEVTEQVEFGAFQKLGDRSSKKQGAV.

The next 6 membrane-spanning stretches (helical) occupy residues A21–S36, I101–W115, G140–F156, I203–T218, V237–T252, and N457–R472.

This sequence belongs to the PsbB/PsbC family. PsbB subfamily. As to quaternary structure, PSII is composed of 1 copy each of membrane proteins PsbA, PsbB, PsbC, PsbD, PsbE, PsbF, PsbH, PsbI, PsbJ, PsbK, PsbL, PsbM, PsbT, PsbX, PsbY, PsbZ, Psb30/Ycf12, at least 3 peripheral proteins of the oxygen-evolving complex and a large number of cofactors. It forms dimeric complexes. It depends on Binds multiple chlorophylls. PSII binds additional chlorophylls, carotenoids and specific lipids. as a cofactor.

It localises to the plastid. Its subcellular location is the chloroplast thylakoid membrane. Functionally, one of the components of the core complex of photosystem II (PSII). It binds chlorophyll and helps catalyze the primary light-induced photochemical processes of PSII. PSII is a light-driven water:plastoquinone oxidoreductase, using light energy to abstract electrons from H(2)O, generating O(2) and a proton gradient subsequently used for ATP formation. The chain is Photosystem II CP47 reaction center protein from Pyropia yezoensis (Susabi-nori).